The primary structure comprises 518 residues: Filamentous growth regulator 15 (518 aa).

Residues 1-41 (MESTLSVSDEKLTNSSTALNNCGDNKESSQVLTTANTTTDN) show a composition bias toward polar residues. Disordered stretches follow at residues 1–63 (MEST…SKER), 75–101 (VDPN…DHGK), and 261–307 (KSRS…KQHR). The span at 42 to 52 (QQVQPKSQHQQ) shows a compositional bias: low complexity. Polar residues predominate over residues 77–95 (PNQQSKNTVSDSVQDTTGV). Residues 262–274 (SRSRSKVTKKRKV) show a composition bias toward basic residues. The segment covering 283–298 (SNTATATTSVTTPDAN) has biased composition (low complexity). The C2H2-type zinc-finger motif lies at 374-406 (HECQLPSAEEPHKLCLRRFSRKYELIRHQETVH). Residues 492 to 518 (RKSSGDDTNYMETSDLESGEEEVTFNK) are disordered. A compositionally biased stretch (acidic residues) spans 505–518 (SDLESGEEEVTFNK).

Its subcellular location is the nucleus. Its function is as follows. Probable transcription factor involved in the regulation of filamentous growth. The polypeptide is Filamentous growth regulator 15 (FGR15) (Candida albicans (strain SC5314 / ATCC MYA-2876) (Yeast)).